A 332-amino-acid chain; its full sequence is MKQVQTKRDWKKLAYDVVEEKMITKEDAIAILEADDTEVLEIMNAAYIIRHHYFGKKVKLNMIINTKSGLCPEDCGYCSQSIISEAPIDKYAWLTQEKIVEGAHEAIRRKAGTYCIVASGRRPTDKEVNHVIGAVKEIRETTDLKICCCLGFLNEDQAGRLAEAGVHRYNHNLNTHANNYESICSTHTYDDRVDTVQKAKQAGISPCSGAIFGMGETIEERAEIAFELQRIDADSIPCNFLVAVKGTPLEGQKELTPVECLKVLAMMRFVNPTKEIRISGGREINLRSVQPIGLFAANSIFVGDYLTTAGQEPTADWGMIEDLGFEIEECAL.

One can recognise a Radical SAM core domain in the interval 53–282; it reads YFGKKVKLNM…TKEIRISGGR (230 aa). Residues cysteine 71, cysteine 75, and cysteine 78 each contribute to the [4Fe-4S] cluster site. [2Fe-2S] cluster contacts are provided by cysteine 115, cysteine 147, cysteine 207, and arginine 277.

The protein belongs to the radical SAM superfamily. Biotin synthase family. Homodimer. [4Fe-4S] cluster serves as cofactor. The cofactor is [2Fe-2S] cluster.

It carries out the reaction (4R,5S)-dethiobiotin + (sulfur carrier)-SH + 2 reduced [2Fe-2S]-[ferredoxin] + 2 S-adenosyl-L-methionine = (sulfur carrier)-H + biotin + 2 5'-deoxyadenosine + 2 L-methionine + 2 oxidized [2Fe-2S]-[ferredoxin]. Its pathway is cofactor biosynthesis; biotin biosynthesis; biotin from 7,8-diaminononanoate: step 2/2. Catalyzes the conversion of dethiobiotin (DTB) to biotin by the insertion of a sulfur atom into dethiobiotin via a radical-based mechanism. The chain is Biotin synthase from Bacillus anthracis.